The following is a 594-amino-acid chain: A-type ATP synthase subunit A (594 aa).

236–243 (GPFGSGKT) is a binding site for ATP.

This sequence belongs to the ATPase alpha/beta chains family. Has multiple subunits with at least A(3), B(3), C, D, E, F, H, I and proteolipid K(x).

Its subcellular location is the cell membrane. The catalysed reaction is ATP + H2O + 4 H(+)(in) = ADP + phosphate + 5 H(+)(out). In terms of biological role, component of the A-type ATP synthase that produces ATP from ADP in the presence of a proton gradient across the membrane. The A chain is the catalytic subunit. The polypeptide is A-type ATP synthase subunit A (Pyrobaculum neutrophilum (strain DSM 2338 / JCM 9278 / NBRC 100436 / V24Sta) (Thermoproteus neutrophilus)).